We begin with the raw amino-acid sequence, 101 residues long: Small ribosomal subunit protein bS18c (101 aa).

It belongs to the bacterial ribosomal protein bS18 family. Part of the 30S ribosomal subunit.

The protein localises to the plastid. It localises to the chloroplast. The protein is Small ribosomal subunit protein bS18c of Vitis vinifera (Grape).